The primary structure comprises 445 residues: 6-phosphogluconate dehydrogenase, decarboxylating (445 aa).

NADP(+) is bound by residues 1–4, 22–24, 63–65, and Asn91; these read AVMG, NRS, and VKA. Substrate-binding positions include Asn91 and 117–119; that span reads SGG. Residue Lys172 is the Proton acceptor of the active site. Position 175–176 (175–176) interacts with substrate; the sequence is HN. The active-site Proton donor is Glu179. Positions 180, 249, 276, 434, and 440 each coordinate substrate.

This sequence belongs to the 6-phosphogluconate dehydrogenase family. As to quaternary structure, homodimer.

The enzyme catalyses 6-phospho-D-gluconate + NADP(+) = D-ribulose 5-phosphate + CO2 + NADPH. The protein operates within carbohydrate degradation; pentose phosphate pathway; D-ribulose 5-phosphate from D-glucose 6-phosphate (oxidative stage): step 3/3. In terms of biological role, catalyzes the oxidative decarboxylation of 6-phosphogluconate to ribulose 5-phosphate and CO(2), with concomitant reduction of NADP to NADPH. The protein is 6-phosphogluconate dehydrogenase, decarboxylating (gnd) of Shigella sonnei.